A 188-amino-acid chain; its full sequence is MATVSTNEFKGGLKLMLDNEPCVILENEYVKPGKGQAFNRVKIRKLLSGKVLEKTFKSGDTCEVADVMDIDLDYLYSDGEFYHFMNNETFEQIAADAKAVGENAKWLVENNTCMITLWNGNPITVTPPNFVELEVTDTDPGLKGDTQGTGGKPATLATGAVVRVPLFIAIGEVIKVDTRTGEYVGRVK.

N6-(3,6-diaminohexanoyl)-5-hydroxylysine is present on lysine 34.

It belongs to the elongation factor P family. In terms of processing, may be beta-lysylated on the epsilon-amino group of Lys-34 by the combined action of EpmA and EpmB, and then hydroxylated on the C5 position of the same residue by EpmC (if this protein is present). Lysylation is critical for the stimulatory effect of EF-P on peptide-bond formation. The lysylation moiety may extend toward the peptidyltransferase center and stabilize the terminal 3-CCA end of the tRNA. Hydroxylation of the C5 position on Lys-34 may allow additional potential stabilizing hydrogen-bond interactions with the P-tRNA.

It is found in the cytoplasm. It functions in the pathway protein biosynthesis; polypeptide chain elongation. In terms of biological role, involved in peptide bond synthesis. Alleviates ribosome stalling that occurs when 3 or more consecutive Pro residues or the sequence PPG is present in a protein, possibly by augmenting the peptidyl transferase activity of the ribosome. Modification of Lys-34 is required for alleviation. This is Elongation factor P from Vibrio parahaemolyticus serotype O3:K6 (strain RIMD 2210633).